The primary structure comprises 1207 residues: Histidine kinase 1 (1207 aa).

Residues 1-10 (MRGDSFSMSI) are compositionally biased toward polar residues. Positions 1–20 (MRGDSFSMSIENLPDSPMGS) are disordered. The Cytoplasmic segment spans residues 1 to 81 (MRGDSFSMSI…SSYYSVFVVR (81 aa)). The chain crosses the membrane as a helical span at residues 82-102 (LAIMVMLAILIGLLTVLTWHF). At 103 to 446 (TRIYTKQSLQ…GKVDERAFKT (344 aa)) the chain is on the extracellular side. The helical transmembrane segment at 447–467 (LIILISASVCIFFIGCVCILI) threads the bilayer. Residues 468 to 1207 (LTNGVSKEMK…PSAFQTSLSA (740 aa)) are Cytoplasmic-facing. The region spanning 505–763 (NMSHELRTPM…LMRLYLILST (259 aa)) is the Histidine kinase domain. At His-508 the chain carries Phosphohistidine; by autocatalysis. Disordered stretches follow at residues 964 to 987 (DTCSSDDSSETSGEKQVDKSVKPS) and 1000 to 1021 (DATTSNDDSTSASMTQKNPEEE). Basic and acidic residues predominate over residues 975-984 (SGEKQVDKSV). A compositionally biased stretch (low complexity) spans 1000 to 1014 (DATTSNDDSTSASMT). The Response regulatory domain occupies 1045 to 1196 (RILLAEDTPV…LMVSTILSLT (152 aa)). Asp-1127 bears the 4-aspartylphosphate mark.

In terms of assembly, interacts with AHP2, depending of the phosphorylation state of Asp-1075 in the receiver domain, but probably not with AHP1 and AHP3. Post-translationally, autophosphorylated predominantly on His residues. Activation probably requires a transfer of a phosphate group between a His in the transmitter domain and an Asp of the receiver domain. Mostly expressed in roots, and, to a lower extent, in stems, leaves and flowers.

It localises to the cell membrane. The enzyme catalyses ATP + protein L-histidine = ADP + protein N-phospho-L-histidine.. Functions as an osmosensor histidine kinase that detects water stress and transmits the stress signal to a downstream MAPK cascade. This protein undergoes an ATP-dependent autophosphorylation at a conserved histidine residue in the kinase core, and a phosphoryl group is then transferred to a conserved aspartate residue in the receiver domain. Positive regulator of drought and salt stress responses, and abscisic acid (ABA) signaling. Confers drought tolerance, probably by regulating levels of ABA accumulation. Plays a redundant role in regulating plant growth and development. Required for the regulation of desiccation processes during seed formation. The protein is Histidine kinase 1 (AHK1) of Arabidopsis thaliana (Mouse-ear cress).